A 378-amino-acid polypeptide reads, in one-letter code: Ribosomal RNA large subunit methyltransferase G (378 aa).

It belongs to the methyltransferase superfamily. RlmG family.

The protein resides in the cytoplasm. The enzyme catalyses guanosine(1835) in 23S rRNA + S-adenosyl-L-methionine = N(2)-methylguanosine(1835) in 23S rRNA + S-adenosyl-L-homocysteine + H(+). Specifically methylates the guanine in position 1835 (m2G1835) of 23S rRNA. This Escherichia coli O139:H28 (strain E24377A / ETEC) protein is Ribosomal RNA large subunit methyltransferase G.